We begin with the raw amino-acid sequence, 94 residues long: Protein RnfH (94 aa).

The protein belongs to the UPF0125 (RnfH) family.

The protein is Protein RnfH of Sodalis glossinidius (strain morsitans).